A 347-amino-acid polypeptide reads, in one-letter code: Anthranilate phosphoribosyltransferase (347 aa).

5-phospho-alpha-D-ribose 1-diphosphate is bound by residues glycine 82, 85 to 86 (GD), threonine 90, 92 to 95 (NIST), 110 to 118 (KHGNRAITS), and threonine 122. Position 82 (glycine 82) interacts with anthranilate. A Mg(2+)-binding site is contributed by serine 94. An anthranilate-binding site is contributed by asparagine 113. Residue arginine 168 participates in anthranilate binding. Residues aspartate 226 and glutamate 227 each coordinate Mg(2+).

It belongs to the anthranilate phosphoribosyltransferase family. As to quaternary structure, homodimer. Requires Mg(2+) as cofactor.

It catalyses the reaction N-(5-phospho-beta-D-ribosyl)anthranilate + diphosphate = 5-phospho-alpha-D-ribose 1-diphosphate + anthranilate. The protein operates within amino-acid biosynthesis; L-tryptophan biosynthesis; L-tryptophan from chorismate: step 2/5. Functionally, catalyzes the transfer of the phosphoribosyl group of 5-phosphorylribose-1-pyrophosphate (PRPP) to anthranilate to yield N-(5'-phosphoribosyl)-anthranilate (PRA). This chain is Anthranilate phosphoribosyltransferase, found in Caulobacter sp. (strain K31).